A 520-amino-acid chain; its full sequence is Serine protease Hip1 (520 aa).

Residues 1 to 30 (MGMRLSRRDKIARMLLIWAALAAVALVLVG) form the signal peptide. Cysteine 31 carries N-palmitoyl cysteine lipidation. Cysteine 31 is lipidated: S-diacylglycerol cysteine. The region spanning 102–497 (GSLVINPGGP…TQHTVVFQGD (396 aa)) is the AB hydrolase-1 domain. The active-site Nucleophile is serine 228. Residue aspartate 463 is part of the active site. Residue histidine 490 is the Proton donor of the active site.

It belongs to the peptidase S33 family.

The protein resides in the cell envelope. Its subcellular location is the cell membrane. Functionally, serine protease that promotes pathogenesis by promoting the processing and the extracellular release of the M.bovis heat-shock protein GroEL2. In terms of biological role, key immunomodulatory virulence factor, which promotes survival in host macrophages and modulates host immune responses. In Mycobacterium bovis (strain ATCC BAA-935 / AF2122/97), this protein is Serine protease Hip1.